Here is a 213-residue protein sequence, read N- to C-terminus: 2,3-bisphosphoglycerate-dependent phosphoglycerate mutase (213 aa).

Substrate-binding positions include 8 to 15 (RHGQSEWN), 21 to 22 (TG), Arg58, 84 to 87 (ERNY), Lys95, 111 to 112 (RR), and 155 to 156 (GN). The Tele-phosphohistidine intermediate role is filled by His9. The Proton donor/acceptor role is filled by Glu84.

The protein belongs to the phosphoglycerate mutase family. BPG-dependent PGAM subfamily.

The enzyme catalyses (2R)-2-phosphoglycerate = (2R)-3-phosphoglycerate. The protein operates within carbohydrate degradation; glycolysis; pyruvate from D-glyceraldehyde 3-phosphate: step 3/5. Its function is as follows. Catalyzes the interconversion of 2-phosphoglycerate and 3-phosphoglycerate. The chain is 2,3-bisphosphoglycerate-dependent phosphoglycerate mutase from Cytophaga hutchinsonii (strain ATCC 33406 / DSM 1761 / CIP 103989 / NBRC 15051 / NCIMB 9469 / D465).